Consider the following 365-residue polypeptide: Carbamoyl phosphate synthase small chain (365 aa).

2 CPSase regions span residues 1–166 and 1–169; these read MKRQ…PSPG and MKRQ…GRGH. Positions 45, 218, and 220 each coordinate L-glutamine. A Glutamine amidotransferase type-1 domain is found at 170 to 357; sequence RVVLVDFGMK…LTMIENFKKE (188 aa). Cys-245 serves as the catalytic Nucleophile. L-glutamine-binding residues include Leu-246, Gln-249, Asn-287, Gly-289, and Tyr-290. Active-site residues include His-330 and Glu-332.

This sequence belongs to the CarA family. Composed of two chains; the small (or glutamine) chain promotes the hydrolysis of glutamine to ammonia, which is used by the large (or ammonia) chain to synthesize carbamoyl phosphate. Tetramer of heterodimers (alpha,beta)4.

It catalyses the reaction hydrogencarbonate + L-glutamine + 2 ATP + H2O = carbamoyl phosphate + L-glutamate + 2 ADP + phosphate + 2 H(+). It carries out the reaction L-glutamine + H2O = L-glutamate + NH4(+). Its pathway is amino-acid biosynthesis; L-arginine biosynthesis; carbamoyl phosphate from bicarbonate: step 1/1. It participates in pyrimidine metabolism; UMP biosynthesis via de novo pathway; (S)-dihydroorotate from bicarbonate: step 1/3. Functionally, small subunit of the glutamine-dependent carbamoyl phosphate synthetase (CPSase). CPSase catalyzes the formation of carbamoyl phosphate from the ammonia moiety of glutamine, carbonate, and phosphate donated by ATP, constituting the first step of 2 biosynthetic pathways, one leading to arginine and/or urea and the other to pyrimidine nucleotides. The small subunit (glutamine amidotransferase) binds and cleaves glutamine to supply the large subunit with the substrate ammonia. The chain is Carbamoyl phosphate synthase small chain from Bacillus anthracis.